Here is a 382-residue protein sequence, read N- to C-terminus: Galactokinase (382 aa).

34–37 lines the substrate pocket; that stretch reads EHTD. 124–130 is a binding site for ATP; that stretch reads GAGLSSS. Residues serine 130 and glutamate 162 each coordinate Mg(2+). The active-site Proton acceptor is aspartate 174. Tyrosine 223 contacts substrate.

The protein belongs to the GHMP kinase family. GalK subfamily.

The protein resides in the cytoplasm. The catalysed reaction is alpha-D-galactose + ATP = alpha-D-galactose 1-phosphate + ADP + H(+). The protein operates within carbohydrate metabolism; galactose metabolism. Its function is as follows. Catalyzes the transfer of the gamma-phosphate of ATP to D-galactose to form alpha-D-galactose-1-phosphate (Gal-1-P). The protein is Galactokinase of Salmonella typhi.